The chain runs to 475 residues: Sensor histidine kinase QseE (475 aa).

At 1-13 (MKRWPVFPRSLRQ) the chain is on the cytoplasmic side. Residues 14–34 (LVMLAFLLILLPLLVLAWQAW) form a helical membrane-spanning segment. Topologically, residues 35–173 (QSLNALSDQA…LQREIAERGQ (139 aa)) are periplasmic. Residues 174-194 (YFGWQSLVLFLVSLVMVLLFT) traverse the membrane as a helical segment. The Cytoplasmic portion of the chain corresponds to 195 to 475 (RMIIGPVKNI…IELPSSKNTK (281 aa)). The region spanning 256-472 (HLSHELKTPL…CFRIELPSSK (217 aa)) is the Histidine kinase domain. Histidine 259 is subject to Phosphohistidine; by autocatalysis.

Autophosphorylated.

Its subcellular location is the cell inner membrane. It carries out the reaction ATP + protein L-histidine = ADP + protein N-phospho-L-histidine.. Functionally, member of the two-component regulatory system QseF/QseE involved in the regulation of virulence and metabolism in EHEC. Required for pedestal formation in host epithelial cells during infection. Autophosphorylates in response to epinephrine, sulfate or phosphate and then probably transfers its phosphate group to QseF. This Escherichia coli O157:H7 protein is Sensor histidine kinase QseE (qseE).